The following is a 306-amino-acid chain: Recombination-associated protein RdgC (306 aa).

This sequence belongs to the RdgC family.

It localises to the cytoplasm. The protein localises to the nucleoid. In terms of biological role, may be involved in recombination. This chain is Recombination-associated protein RdgC, found in Pseudomonas paraeruginosa (strain DSM 24068 / PA7) (Pseudomonas aeruginosa (strain PA7)).